The chain runs to 255 residues: Methionine aminopeptidase (255 aa).

His76 contributes to the substrate binding site. A divalent metal cation-binding residues include Asp93, Asp104, and His167. His174 contributes to the substrate binding site. A divalent metal cation contacts are provided by Glu201 and Glu232.

It belongs to the peptidase M24A family. Methionine aminopeptidase type 1 subfamily. Monomer. Co(2+) serves as cofactor. Requires Zn(2+) as cofactor. The cofactor is Mn(2+). It depends on Fe(2+) as a cofactor.

It carries out the reaction Release of N-terminal amino acids, preferentially methionine, from peptides and arylamides.. Its function is as follows. Removes the N-terminal methionine from nascent proteins. The N-terminal methionine is often cleaved when the second residue in the primary sequence is small and uncharged (Met-Ala-, Cys, Gly, Pro, Ser, Thr, or Val). Requires deformylation of the N(alpha)-formylated initiator methionine before it can be hydrolyzed. This Treponema pallidum (strain Nichols) protein is Methionine aminopeptidase.